Consider the following 367-residue polypeptide: 2-aminoethylphosphonate--pyruvate transaminase (367 aa).

Lysine 193 is modified (N6-(pyridoxal phosphate)lysine).

Belongs to the class-V pyridoxal-phosphate-dependent aminotransferase family. PhnW subfamily. Homodimer. Pyridoxal 5'-phosphate serves as cofactor.

The enzyme catalyses (2-aminoethyl)phosphonate + pyruvate = phosphonoacetaldehyde + L-alanine. In terms of biological role, involved in phosphonate degradation. This chain is 2-aminoethylphosphonate--pyruvate transaminase, found in Vibrio vulnificus (strain CMCP6).